We begin with the raw amino-acid sequence, 406 residues long: Phosphatidylinositol 5-phosphate 4-kinase type-2 alpha (406 aa).

An N-acetylalanine modification is found at alanine 2. A Phosphothreonine modification is found at threonine 3. Phosphoserine is present on serine 14. The PIPK domain occupies 33–405; it reads ASDPLLSVLM…RFLDFIGHIL (373 aa). The interval 59 to 65 is required for interaction with PIP5K1A; it reads VMLMPDD. Residues lysine 89 and lysine 145 each carry the N6-acetyllysine modification. The disordered stretch occupies residues 288-329; sequence QEEVECEENDGEEEGESDGTHPVGTPPDSPGNTLNSSPPLAP. Residues 289–304 show a composition bias toward acidic residues; sequence EEVECEENDGEEEGES.

Homodimer. Interacts with PIP4K2B; the interaction may regulate localization to the nucleus. Probably interacts with PIP5K1A; the interaction inhibits PIP5K1A kinase activity. Post-translationally, phosphorylated in tyrosines. Phosphorylation is induced by light and increases kinase activity. In terms of tissue distribution, expressed ubiquitously, with high levels in the brain. Present in most tissues, except notably skeletal muscle and small intestine.

The protein resides in the cell membrane. The protein localises to the nucleus. It is found in the lysosome. It localises to the cytoplasm. Its subcellular location is the photoreceptor inner segment. The protein resides in the cell projection. The protein localises to the cilium. It is found in the photoreceptor outer segment. It catalyses the reaction a 1,2-diacyl-sn-glycero-3-phospho-(1D-myo-inositol-5-phosphate) + ATP = a 1,2-diacyl-sn-glycero-3-phospho-(1D-myo-inositol-4,5-bisphosphate) + ADP + H(+). The catalysed reaction is 1,2-dihexadecanoyl-sn-glycero-3-phospho-(1D-myo-inositol-5-phosphate) + ATP = 1,2-dihexadecanoyl-sn-glycero-3-phospho-(1D-myo-inositol-4,5-bisphosphate) + ADP + H(+). The enzyme catalyses 1,2-dihexadecanoyl-sn-glycero-3-phospho-(1D-myo-inositol-5-phosphate) + GTP = 1,2-dihexadecanoyl-sn-glycero-3-phospho-(1D-myo-inositol-4,5-bisphosphate) + GDP + H(+). In rod outer segments, activated by light. Inhibited by I-OMe tyrphostin AG-538 (I-OMe-AG-538), acting as an ATP-competitive inhibitor. Catalyzes the phosphorylation of phosphatidylinositol 5-phosphate (PtdIns5P) on the fourth hydroxyl of the myo-inositol ring, to form phosphatidylinositol 4,5-bisphosphate (PtdIns(4,5)P2). Has both ATP- and GTP-dependent kinase activities. May exert its function by regulating the levels of PtdIns5P, which functions in the cytosol by increasing AKT activity and in the nucleus signals through ING2. May regulate the pool of cytosolic PtdIns5P in response to the activation of tyrosine phosphorylation. Required for lysosome-peroxisome membrane contacts and intracellular cholesterol transport through modulating peroxisomal PtdIns(4,5)P2 level. In collaboration with PIP4K2B, has a role in mediating autophagy in times of nutrient stress. Required for autophagosome-lysosome fusion and the regulation of cellular lipid metabolism. May be involved in thrombopoiesis, and the terminal maturation of megakaryocytes and regulation of their size. Negatively regulates insulin signaling through a catalytic-independent mechanism. PIP4Ks interact with PIP5Ks and suppress PIP5K-mediated PtdIns(4,5)P2 synthesis and insulin-dependent conversion to PtdIns(3,4,5)P3. This chain is Phosphatidylinositol 5-phosphate 4-kinase type-2 alpha, found in Homo sapiens (Human).